The chain runs to 701 residues: MARTTPISRYRNIGIVAHVDAGKTTTTERVLFYTGKSHKMGEVHDGAATTDWMVQEQERGITITSAAITAFWQGSEKQHKDQYRFNVIDTPGHVDFTIEVERSLRVLDGAVVVFCGTSGVEPQSETVWRQANKYGVPRIVYVNKMDRAGANFLRVIAQIKQRLGHTPVPIQLAIGAEDNFQGQIDLMAMEAVYWNDSDKGMVPVRKPIPAELQELADEWRGNMVEAAAEASEELMNKYLEGEELTNEEIKAALRQRTIAGEIVLAVCGSSFKNKGVPLVLDAVIDYLPAPIDIPAIKGSDPDNEEILMERHADDSEPFSALAFKIATDPFVGTLTFVRVYSGVLASGDGVINSVKGKKERVGRMVQMHANAREEIKEVRAGDIAALIGMKDVTTGETLCNADKPIILVRMDFPEPVISVAVEPKTKDDQEKMGIALGKLAQEDPSFRVKTDEETGQTIISGMGELHLDILVDRMRREFNVEANIGKPQVSYRERITKNCEIEGKFVRQSGGRGQFGHCWIRFAPADEGQEGLQFVNEVVGGVVPKEYIPAIQKGIEEQMKNGVVAGYPLIGLKATVFDGSYHDVDSNEMAFKVAASMATKQLAQKGGGELLEPIMAVEVVTPEDYMGDVMGDLNRRRGMILGMEDTVSGKVIRAEVPLGEMFGYATDVRSMSQGRASYSMEFKKYNTAPSHIVETVTKKQG.

In terms of domain architecture, tr-type G spans S8–I291. GTP-binding positions include A17–T24, D89–H93, and N143–D146.

The protein belongs to the TRAFAC class translation factor GTPase superfamily. Classic translation factor GTPase family. EF-G/EF-2 subfamily.

It is found in the cytoplasm. Functionally, catalyzes the GTP-dependent ribosomal translocation step during translation elongation. During this step, the ribosome changes from the pre-translocational (PRE) to the post-translocational (POST) state as the newly formed A-site-bound peptidyl-tRNA and P-site-bound deacylated tRNA move to the P and E sites, respectively. Catalyzes the coordinated movement of the two tRNA molecules, the mRNA and conformational changes in the ribosome. The sequence is that of Elongation factor G from Pseudomonas syringae pv. tomato (strain ATCC BAA-871 / DC3000).